The sequence spans 245 residues: MNNYKLTIQYDGARFKGWQRLGNNDNTIQGKIESVISEMIGKEIEIIGCSRTDAGVHALNQVANFQSDEKLVEHKVKKYLNQYLPNDISITNVEEVHDRFHARYNSKAKTYLYKIWNEEHTNPFMRKYSMHVNKKLNVKSMKEAAKHLVGSHDFTAFSNAKSKKKSMVREVYSLEVMEEAGFVQIRVSGNGFLHNMVRKIVGALIEVGLGQLDAEAIPQILEAKQRNQINCLAEASGLYLENVEF.

Asp53 functions as the Nucleophile in the catalytic mechanism. Position 111 (Tyr111) interacts with substrate.

It belongs to the tRNA pseudouridine synthase TruA family. As to quaternary structure, homodimer.

It catalyses the reaction uridine(38/39/40) in tRNA = pseudouridine(38/39/40) in tRNA. Functionally, formation of pseudouridine at positions 38, 39 and 40 in the anticodon stem and loop of transfer RNAs. The protein is tRNA pseudouridine synthase A 2 of Bacillus cereus (strain ZK / E33L).